The primary structure comprises 216 residues: Regulator of G-protein signaling 19 (216 aa).

Basic and acidic residues predominate over residues 1–19; the sequence is MPTPHEAEKQHTGPEEADR. The segment at 1-30 is disordered; sequence MPTPHEAEKQHTGPEEADRPPSMSSHDAAP. Residues S24 and S97 each carry the phosphoserine modification. The 117-residue stretch at 90–206 folds into the RGS domain; it reads SFDKLMHSPT…LTSPTYRSLL (117 aa). S151 carries the post-translational modification Phosphoserine; by MAPK1 and MAPK3. The interval 207–216 is interaction with GIPC; that stretch reads LQGAPQSSEA.

In terms of assembly, interacts with GIPC PDZ domain. Interacts with GNAO1. Post-translationally, fatty acylated. Heavily palmitoylated in the cysteine string motif. In terms of processing, phosphorylated, mainly on serine residues.

Its subcellular location is the membrane. Inhibits signal transduction by increasing the GTPase activity of G protein alpha subunits thereby driving them into their inactive GDP-bound form. Binds to G-alpha subfamily 1 members, with the order G(i)a3 &gt; G(i)a1 &gt; G(o)a &gt;&gt; G(z)a/G(i)a2. Activity on G(z)-alpha is inhibited by phosphorylation and palmitoylation of the G-protein. The polypeptide is Regulator of G-protein signaling 19 (Rgs19) (Mus musculus (Mouse)).